Here is an 89-residue protein sequence, read N- to C-terminus: MERTVTVVPEDGLHARPASKFVETANKFDADVQLGRADEDDLVPAASMLAVTGLGVGHDESVRLVAEGDDAEAALDALEDILSTPEAKQ.

Residues 1–89 enclose the HPr domain; sequence MERTVTVVPE…DILSTPEAKQ (89 aa). Residue His-14 is the Pros-phosphohistidine intermediate of the active site. Ser-47 carries the post-translational modification Phosphoserine; by HPrK/P.

It belongs to the HPr family.

The protein localises to the cytoplasm. Phosphorylation on Ser-47 inhibits the phosphoryl transfer from enzyme I to HPr. Functionally, general (non sugar-specific) component of the phosphoenolpyruvate-dependent sugar phosphotransferase system (sugar PTS). This major carbohydrate active-transport system catalyzes the phosphorylation of incoming sugar substrates concomitantly with their translocation across the cell membrane. The phosphoryl group from phosphoenolpyruvate (PEP) is transferred to the phosphoryl carrier protein HPr by enzyme I. Phospho-HPr then transfers it to the PTS EIIA domain. Is involved in fructose transport. In Haloferax volcanii (strain ATCC 29605 / DSM 3757 / JCM 8879 / NBRC 14742 / NCIMB 2012 / VKM B-1768 / DS2) (Halobacterium volcanii), this protein is Phosphocarrier protein HPr (ptsH1).